We begin with the raw amino-acid sequence, 226 residues long: Lysosomal-associated transmembrane protein 4B (226 aa).

The next 4 membrane-spanning stretches (helical) occupy residues 26–46 (ILLG…LLSA), 72–92 (MCIA…ATYG), 100–120 (WIIP…LVAI), and 153–173 (CLVL…GYLI). Positions 205 to 221 (PPYDDATVNGAAKEPPP) are required for NEDD4 interaction.

This sequence belongs to the LAPTM4/LAPTM5 transporter family. In terms of assembly, homooligomer; upon reaching the lysosomes. Interacts with MCOLN1. Interacts with NEDD4; may play a role in the lysosomal sorting of LAPTM4B; enhances HGS association with NEDD4; mediates inhibition of EGFR degradation. Interacts with PIP5K1C; promotes SNX5 association with LAPTM4B; kinase activity of PIP5K1C is required; interaction is regulated by phosphatidylinositol 4,5-bisphosphate generated by PIP5K1C. Interacts with HGS; promotes HGS ubiquitination. Interacts with SNX5. Interacts with SLC3A2 and SLC7A5; recruits SLC3A2 and SLC7A5 to lysosomes to promote leucine uptake into these organelles and is required for mTORC1 activation. Interacts with LRRC32; decreases TGFB1 production in regulatory T cells. Interacts with BECN1; competes with EGFR for LAPTM4B binding; regulates EGFR activity. Interacts with EGFR; positively correlates with EGFR activation. In terms of processing, undergoes proteolytic cleavage following delivery to the lysosomes. Post-translationally, ubiquitinated by NEDD4.

It localises to the endomembrane system. It is found in the late endosome membrane. Its subcellular location is the cell membrane. The protein localises to the cell projection. The protein resides in the lysosome membrane. It localises to the endosome membrane. It is found in the endosome. Its subcellular location is the multivesicular body membrane. The protein localises to the multivesicular body lumen. Required for optimal lysosomal function. Blocks EGF-stimulated EGFR intraluminal sorting and degradation. Conversely by binding with the phosphatidylinositol 4,5-bisphosphate, regulates its PIP5K1C interaction, inhibits HGS ubiquitination and relieves LAPTM4B inhibition of EGFR degradation. Recruits SLC3A2 and SLC7A5 (the Leu transporter) to the lysosome, promoting entry of leucine and other essential amino acid (EAA) into the lysosome, stimulating activation of proton-transporting vacuolar (V)-ATPase protein pump (V-ATPase) and hence mTORC1 activation. Plays a role as negative regulator of TGFB1 production in regulatory T cells. Binds ceramide and facilitates its exit from late endosome in order to control cell death pathways. This Macaca fascicularis (Crab-eating macaque) protein is Lysosomal-associated transmembrane protein 4B.